Reading from the N-terminus, the 229-residue chain is Protein FMP52-2, mitochondrial (229 aa).

The N-terminal 45 residues, methionine 1 to lysine 45, are a transit peptide targeting the mitochondrion.

It belongs to the FMP52 family.

The protein localises to the mitochondrion outer membrane. The protein is Protein FMP52-2, mitochondrial (FMP522) of Scheffersomyces stipitis (strain ATCC 58785 / CBS 6054 / NBRC 10063 / NRRL Y-11545) (Yeast).